Here is a 450-residue protein sequence, read N- to C-terminus: MYKSLSLDLTKTKPFLNDYEVEQLQPMVSAAHKLLHEKTGAGNDFLGWIDLPVNYDKDEFARIKKSAEKIRNNSEALIVIGIGGSYLGARAAIEMLTHTFGNVASKEARKAPQIFYAGNNISSTYMADLIETVKDMDFSVNVISKSGTTTEPAIAFRIFKDLLEKKYGKEGAKERIFATTDKAKGALRTLADSEGYETFVIPDDVGGRYSVLTAVGLLPIATAGVDIDEMMKGAADAREEYSTDDLSKNTAYRYAAARNALYNKGKNIEMMVNFEPCLHYIGEWWKQLFGESEGKDHKGIFPAAADFSTDLHSMGQYIQEGLRTLVETHLNVEKPRKSVIIEANEDNLDGLNFLAGKDMDYVNNQAFRGTVIAHNEGEVPNMIINIPELTPYYFGYLVYFFEKSCALSGYLLGVNPFNQPGVEAYKKNMFALLGKPGYEDMKAEIEAKLQ.

Glu291 serves as the catalytic Proton donor. Active-site residues include His312 and Lys426.

This sequence belongs to the GPI family.

The protein resides in the cytoplasm. The catalysed reaction is alpha-D-glucose 6-phosphate = beta-D-fructose 6-phosphate. It participates in carbohydrate biosynthesis; gluconeogenesis. Its pathway is carbohydrate degradation; glycolysis; D-glyceraldehyde 3-phosphate and glycerone phosphate from D-glucose: step 2/4. Functionally, catalyzes the reversible isomerization of glucose-6-phosphate to fructose-6-phosphate. The chain is Glucose-6-phosphate isomerase from Clostridium novyi (strain NT).